Here is a 247-residue protein sequence, read N- to C-terminus: Carboxy-S-adenosyl-L-methionine synthase (247 aa).

S-adenosyl-L-methionine is bound by residues Tyr-39, 64–66, 89–90, 117–118, Asn-132, and Arg-199; these read GCS, DN, and DI.

The protein belongs to the class I-like SAM-binding methyltransferase superfamily. Cx-SAM synthase family. As to quaternary structure, homodimer.

The catalysed reaction is prephenate + S-adenosyl-L-methionine = carboxy-S-adenosyl-L-methionine + 3-phenylpyruvate + H2O. Its function is as follows. Catalyzes the conversion of S-adenosyl-L-methionine (SAM) to carboxy-S-adenosyl-L-methionine (Cx-SAM). The chain is Carboxy-S-adenosyl-L-methionine synthase from Escherichia coli O127:H6 (strain E2348/69 / EPEC).